A 295-amino-acid polypeptide reads, in one-letter code: uncharacterized protein (295 aa).

Residues 1 to 19 form the signal peptide; that stretch reads MHKLLLIITVFFTFNVAQA.

This is an uncharacterized protein from Rickettsia prowazekii (strain Madrid E).